The primary structure comprises 146 residues: Snaclec 5 (146 aa).

The N-terminal stretch at 1–23 (MGRFIFISFGLLVVFLSLSGTEA) is a signal peptide. Disulfide bonds link Cys25–Cys36, Cys53–Cys142, and Cys119–Cys134. Residues 32–143 (YEGHCYRVFD…CRNYGHFVCK (112 aa)) form the C-type lectin domain.

This sequence belongs to the snaclec family. In terms of assembly, heterodimer; disulfide-linked. Expressed by the venom gland.

The protein resides in the secreted. Its function is as follows. Interferes with one step of hemostasis (modulation of platelet aggregation, or coagulation cascade, for example). The polypeptide is Snaclec 5 (Echis pyramidum leakeyi (Leakey's carpet viper)).